The sequence spans 1078 residues: Transmembrane protein 132B (1078 aa).

The Extracellular portion of the chain corresponds to 1 to 903 (MFGAASRMDT…LTDLEIGMYA (903 aa)). N-linked (GlcNAc...) asparagine glycosylation is found at asparagine 343, asparagine 366, and asparagine 381. Residues 834 to 887 (RGTPVGQEESTNKSTTPQSPMEGKNKLLKSGGPDAFTSFPTQGKSPDPNNPSDL) form a disordered region. Polar residues predominate over residues 841–852 (EESTNKSTTPQS). A helical membrane pass occupies residues 904 to 924 (LLCVFCLAILVFLINCVAFAW). At 925 to 1078 (KYRHKRFAVS…DYMESLQDQM (154 aa)) the chain is on the cytoplasmic side.

It belongs to the TMEM132 family.

Its subcellular location is the membrane. The polypeptide is Transmembrane protein 132B (TMEM132B) (Homo sapiens (Human)).